Consider the following 78-residue polypeptide: Translation initiation factor IF-1 (78 aa).

Residues 2 to 78 form the S1-like domain; sequence SKNNLNETES…TRARITYRFK (77 aa).

It belongs to the IF-1 family. As to quaternary structure, component of the 30S ribosomal translation pre-initiation complex which assembles on the 30S ribosome in the order IF-2 and IF-3, IF-1 and N-formylmethionyl-tRNA(fMet); mRNA recruitment can occur at any time during PIC assembly.

The protein localises to the cytoplasm. In terms of biological role, one of the essential components for the initiation of protein synthesis. Stabilizes the binding of IF-2 and IF-3 on the 30S subunit to which N-formylmethionyl-tRNA(fMet) subsequently binds. Helps modulate mRNA selection, yielding the 30S pre-initiation complex (PIC). Upon addition of the 50S ribosomal subunit IF-1, IF-2 and IF-3 are released leaving the mature 70S translation initiation complex. In Onion yellows phytoplasma (strain OY-M), this protein is Translation initiation factor IF-1.